The chain runs to 115 residues: Macroconotoxin Mu8.1 (115 aa).

An N-terminal signal peptide occupies residues 1–21 (MDMKMTFSGLVLVVLVTTVVG). Residues 22-26 (SSVRR) constitute a propeptide that is removed on maturation. Intrachain disulfides connect C36–C77, C44–C60, C48–C56, C83–C115, and C87–C97. E40 contacts Zn(2+). Residue H68 coordinates Zn(2+).

In terms of assembly, mostly found as a homodimer in solution; non-covalently bound. Expressed by the venom duct.

Its subcellular location is the secreted. Its function is as follows. Modestly and reversibly inhibits Cav2.3/CACNA1E (IC(50)=5.8 uM) recombinantly expressed in HEK293 cells without affecting the voltage dependence of activation. In mouse DRG sensory neurons, modulates depolarization-induced calcium influx. This is Macroconotoxin Mu8.1 from Conus mucronatus (Pointed cone).